The primary structure comprises 282 residues: Bifunctional protein FolD (282 aa).

Residues 167–169 (GRS) and Ser192 each bind NADP(+).

Belongs to the tetrahydrofolate dehydrogenase/cyclohydrolase family. Homodimer.

It carries out the reaction (6R)-5,10-methylene-5,6,7,8-tetrahydrofolate + NADP(+) = (6R)-5,10-methenyltetrahydrofolate + NADPH. The catalysed reaction is (6R)-5,10-methenyltetrahydrofolate + H2O = (6R)-10-formyltetrahydrofolate + H(+). Its pathway is one-carbon metabolism; tetrahydrofolate interconversion. In terms of biological role, catalyzes the oxidation of 5,10-methylenetetrahydrofolate to 5,10-methenyltetrahydrofolate and then the hydrolysis of 5,10-methenyltetrahydrofolate to 10-formyltetrahydrofolate. This Acidobacterium capsulatum (strain ATCC 51196 / DSM 11244 / BCRC 80197 / JCM 7670 / NBRC 15755 / NCIMB 13165 / 161) protein is Bifunctional protein FolD.